A 293-amino-acid chain; its full sequence is Cell adhesion molecule CEACAM21 (293 aa).

Residues 1-34 form the signal peptide; it reads MGPPSACPHRECIPWQGLLLTASLLTFWNAPTTA. The Extracellular portion of the chain corresponds to 35–240; it reads WLFIASAPFE…TVKSDDNTLG (206 aa). N-linked (GlcNAc...) asparagine glycosylation occurs at asparagine 111. The Ig-like C2-type domain occupies 147 to 231; sequence PSIQASSTTV…SNRSDPLKLT (85 aa). Residues cysteine 166 and cysteine 214 are joined by a disulfide bond. A helical transmembrane segment spans residues 241–261; that stretch reads ILIGVLVGSLLVAALVCFLLL. Residues 262-293 lie on the Cytoplasmic side of the membrane; sequence RKTGRASDQSDFREQQPPASTPGHGPSDSSIS. Positions 267–293 are disordered; that stretch reads ASDQSDFREQQPPASTPGHGPSDSSIS.

The protein belongs to the immunoglobulin superfamily. CEA family.

The protein localises to the membrane. The sequence is that of Cell adhesion molecule CEACAM21 from Homo sapiens (Human).